A 502-amino-acid chain; its full sequence is Cytochrome P450 2J3 (502 aa).

Position 448 (Cys-448) interacts with heme.

It belongs to the cytochrome P450 family. Requires heme as cofactor. As to expression, abundantly expressed in heart and liver.

The protein resides in the endoplasmic reticulum membrane. It localises to the microsome membrane. It carries out the reaction an organic molecule + reduced [NADPH--hemoprotein reductase] + O2 = an alcohol + oxidized [NADPH--hemoprotein reductase] + H2O + H(+). Its function is as follows. This enzyme metabolizes arachidonic acid predominantly via a NADPH-dependent olefin epoxidation mainly to 14,15-, 11,12-, and 8,9-epoxyeicosatrienoic acids (EET). It also acts as an omega-1-hydroxylase by metabolizing arachidonic acid to 19-hydroxyeicosatetraenoic acid (19-OH-AA). This Rattus norvegicus (Rat) protein is Cytochrome P450 2J3 (Cyp2j3).